A 617-amino-acid polypeptide reads, in one-letter code: Sodium-coupled monocarboxylate transporter 2 (617 aa).

The Extracellular segment spans residues 1–5 (MEVKN). Residues 6-26 (FAVWDYVVFAALFIISSGIGV) form a helical membrane-spanning segment. The Cytoplasmic portion of the chain corresponds to 27–47 (FYAIKERKKATSREFLVGGRQ). A helical transmembrane segment spans residues 48-68 (MSFGPVALSLTASFMSAVTVL). Topologically, residues 69-80 (GTPADVYRFGAS) are extracellular. The chain crosses the membrane as a helical span at residues 81-101 (FVLFFITYGLVIILTSELFLP). Residues 102 to 128 (VFYRSGITSTYEYLQLRFNKPVRYAAT) are Cytoplasmic-facing. The chain crosses the membrane as a helical span at residues 129-149 (VIYIVQTILYTGVVVYAPALA). Over 150–157 (LNQVTGFD) the chain is Extracellular. Residues 158–178 (LWGSVFATGIVCTFYCTLGGL) traverse the membrane as a helical segment. At 179–180 (KA) the chain is on the cytoplasmic side. The chain crosses the membrane as a helical span at residues 181–201 (VVWTDAFQMVVMIVGFLTVLI). Residues 202–235 (QGSTYAGGLHNVLEQAENGSRLNIFDFDIDPLRR) are Extracellular-facing. N-linked (GlcNAc...) asparagine glycosylation is present at N219. Residues 236–256 (HTFWTISVGGTFTWLGIYGVN) traverse the membrane as a helical segment. Over 257 to 273 (QSTIQRCISCKTEKHAK) the chain is Cytoplasmic. Residues 274–294 (LALYFNLLGLWIILLCAVFSG) traverse the membrane as a helical segment. Topologically, residues 295-334 (LTMYAHFKDCDPWTSGIISAPDQLMPYFVMELFSTMPGLP) are extracellular. Residues 335–357 (GLFVACAFSGTLSTVAASINALA) form a helical membrane-spanning segment. Residues 358–385 (TVTFEDFVKSCFPRLSDKLSTWISKGLC) are Cytoplasmic-facing. A helical membrane pass occupies residues 386 to 406 (LLFGVICTSTAVAASLMGGVI). Residues 407-411 (QAALS) lie on the Extracellular side of the membrane. The chain crosses the membrane as a helical span at residues 412–432 (IHGMCGGPMLGLFSLGILFPF). The Cytoplasmic portion of the chain corresponds to 433–437 (VNWKG). Residues 438–458 (ALAGLLTGILLSFWVAIGAFI) traverse the membrane as a helical segment. At 459 to 507 (YPAPASKTWPLPLSTDQCGLSNVTESVPPVLSSRPAIAETWYALSYLHY) the chain is on the extracellular side. A glycan (N-linked (GlcNAc...) asparagine) is linked at N480. A helical transmembrane segment spans residues 508-528 (STVGCLGCIAAGVIISFLTGL). Topologically, residues 529–617 (QKGKDIPPLL…NMALEKITHF (89 aa)) are cytoplasmic.

The protein belongs to the sodium:solute symporter (SSF) (TC 2.A.21) family.

Its subcellular location is the apical cell membrane. The catalysed reaction is (S)-lactate(out) + Na(+)(out) = (S)-lactate(in) + Na(+)(in). It carries out the reaction nicotinate(out) + Na(+)(out) = nicotinate(in) + Na(+)(in). It catalyses the reaction pyruvate(out) + Na(+)(out) = pyruvate(in) + Na(+)(in). The enzyme catalyses propanoate(out) + Na(+)(out) = propanoate(in) + Na(+)(in). The catalysed reaction is butanoate(out) + Na(+)(out) = butanoate(in) + Na(+)(in). It carries out the reaction acetoacetate(out) + Na(+)(out) = acetoacetate(in) + Na(+)(in). Acts as an electroneutral and low-affinity sodium (Na(+))-dependent sodium-coupled solute transporter. Catalyzes the transport across the plasma membrane of many monocarboxylates such as lactate, pyruvate, nicotinate, propionate, butyrate and beta-D-hydroxybutyrate. May be responsible for the first step of reabsorption of monocarboxylates from the lumen of the proximal tubule of the kidney and the small intestine. May play also a role in monocarboxylates transport in the retina. Mediates electroneutral uptake of lactate, with a stoichiometry of 2 Na(+) for each lactate. The sequence is that of Sodium-coupled monocarboxylate transporter 2 (SLC5A12) from Bos taurus (Bovine).